Here is a 342-residue protein sequence, read N- to C-terminus: ATP synthase subunit a (342 aa).

Transmembrane regions (helical) follow at residues 11 to 31, 109 to 129, 170 to 190, 199 to 219, 238 to 258, 262 to 282, 287 to 307, and 308 to 328; these read GLIK…AFAS, HVVT…IIGS, YLPY…LGLV, NINV…IAAL, ALWI…PVAL, LFAN…ISFI, IVAV…EIFV, and AFLQ…LASA.

Belongs to the ATPase A chain family. As to quaternary structure, F-type ATPases have 2 components, CF(1) - the catalytic core - and CF(0) - the membrane proton channel. CF(1) has five subunits: alpha(3), beta(3), gamma(1), delta(1), epsilon(1). CF(0) has four main subunits: a, b, b' and c.

It localises to the cell inner membrane. Its function is as follows. Key component of the proton channel; it plays a direct role in the translocation of protons across the membrane. This Chlorobium phaeobacteroides (strain DSM 266 / SMG 266 / 2430) protein is ATP synthase subunit a.